The following is a 227-amino-acid chain: Orotidine 5'-phosphate decarboxylase (227 aa).

Substrate contacts are provided by residues aspartate 8, lysine 30, 59 to 68 (DLKLYDIPNT), threonine 118, arginine 178, glutamine 187, glycine 207, and arginine 208. Residue lysine 61 is the Proton donor of the active site.

It belongs to the OMP decarboxylase family. Type 1 subfamily. In terms of assembly, homodimer.

It catalyses the reaction orotidine 5'-phosphate + H(+) = UMP + CO2. The protein operates within pyrimidine metabolism; UMP biosynthesis via de novo pathway; UMP from orotate: step 2/2. Functionally, catalyzes the decarboxylation of orotidine 5'-monophosphate (OMP) to uridine 5'-monophosphate (UMP). In Nitratiruptor sp. (strain SB155-2), this protein is Orotidine 5'-phosphate decarboxylase.